Reading from the N-terminus, the 456-residue chain is MEKLWGGRFQGKSEAWIDDFGASISFDQKMAKEDLAGSLAHVAMLSKCGIIPASEAAEITAGLKILQEKLALGELEFSTVNEDIHLNIEKLLHEEIGPVAGKLHTARSRNDQVATDMHLYLKQAVAEIIQSLKHLRVVLVQKAEANVETIMPGYTHLQHAQPISFAHHLLAYFGMFTRDLERLEESVKRIDISPLGSAALAGTTFPIDRAYSAELLGFSAIYENSLDGVSDRDFIIEFLSNSSILMMHLSRFCEELILWTSHEFQFVELTDAFSTGSSIMPQKKNPDMAELIRGKTGRVYGNLFGMLTVLKGLPLAYNKDLQEDKEGMFDTLETVQTSLDIFAGMIETMKINTEIMEESTQKDFSNATELADYLAKKGVPFREAHEIVGKLVLECTQNGIYLQDVALSHYQEINPLIDDDIYVVLSSKTAVQKRNSYGGTGFDQIKVALENAKKTL.

The protein belongs to the lyase 1 family. Argininosuccinate lyase subfamily.

It localises to the cytoplasm. The enzyme catalyses 2-(N(omega)-L-arginino)succinate = fumarate + L-arginine. Its pathway is amino-acid biosynthesis; L-arginine biosynthesis; L-arginine from L-ornithine and carbamoyl phosphate: step 3/3. In Listeria monocytogenes serotype 4b (strain CLIP80459), this protein is Argininosuccinate lyase.